Consider the following 245-residue polypeptide: Probable transcriptional regulatory protein Aflv_0709 (245 aa).

Residues 1–14 (MAGHSKWKNIQRRK) are compositionally biased toward basic residues. A disordered region spans residues 1 to 21 (MAGHSKWKNIQRRKNAQDAKR).

This sequence belongs to the TACO1 family.

It localises to the cytoplasm. This Anoxybacillus flavithermus (strain DSM 21510 / WK1) protein is Probable transcriptional regulatory protein Aflv_0709.